The chain runs to 636 residues: 1-deoxy-D-xylulose-5-phosphate synthase (636 aa).

Thiamine diphosphate-binding positions include His-72 and 113–115 (GHA). Asp-144 lines the Mg(2+) pocket. Residues 145 to 146 (GA), Asn-174, Tyr-287, and Glu-370 contribute to the thiamine diphosphate site. Residue Asn-174 participates in Mg(2+) binding.

The protein belongs to the transketolase family. DXPS subfamily. In terms of assembly, homodimer. Mg(2+) is required as a cofactor. The cofactor is thiamine diphosphate.

The catalysed reaction is D-glyceraldehyde 3-phosphate + pyruvate + H(+) = 1-deoxy-D-xylulose 5-phosphate + CO2. The protein operates within metabolic intermediate biosynthesis; 1-deoxy-D-xylulose 5-phosphate biosynthesis; 1-deoxy-D-xylulose 5-phosphate from D-glyceraldehyde 3-phosphate and pyruvate: step 1/1. In terms of biological role, catalyzes the acyloin condensation reaction between C atoms 2 and 3 of pyruvate and glyceraldehyde 3-phosphate to yield 1-deoxy-D-xylulose-5-phosphate (DXP). The sequence is that of 1-deoxy-D-xylulose-5-phosphate synthase from Microcystis aeruginosa (strain NIES-843 / IAM M-2473).